The chain runs to 193 residues: Lipopolysaccharide core heptose(II)-phosphate phosphatase (193 aa).

An N-terminal signal peptide occupies residues 1 to 25 (MKLKKHVAVLLISFLCLIGLVTQHA).

It belongs to the phosphoglycerate mutase family. Ais subfamily.

Its subcellular location is the periplasm. The protein operates within bacterial outer membrane biogenesis; lipopolysaccharide metabolism. In terms of biological role, catalyzes the dephosphorylation of heptose(II) of the outer membrane lipopolysaccharide core. This is Lipopolysaccharide core heptose(II)-phosphate phosphatase from Escherichia fergusonii (strain ATCC 35469 / DSM 13698 / CCUG 18766 / IAM 14443 / JCM 21226 / LMG 7866 / NBRC 102419 / NCTC 12128 / CDC 0568-73).